A 1485-amino-acid chain; its full sequence is Formin BNR1 (1485 aa).

Disordered regions lie at residues 65–88, 226–248, and 549–575; these read HLPPPRLDTDSESVSSRTSSPTLH, HDDSSTSKLSIESGGSSGAPTET, and ANTSLEEDELTPELEDNLSGTESSFDE. The region spanning 110-636 is the GBD/FH3 domain; it reads NQIPPEEIVD…HVTNESRVIG (527 aa). A compositionally biased stretch (polar residues) spans 231-248; it reads TSKLSIESGGSSGAPTET. The span at 553–564 shows a compositional bias: acidic residues; sequence LEEDELTPELED. Positions 660–734 form a coiled coil; sequence ARRAVAESKM…EQLQSPNNTA (75 aa). A disordered region spans residues 746–874; sequence GNGTVASLKD…GFMNASAPPP (129 aa). One can recognise an FH2 domain in the interval 953-1368; the sequence is VVPSIRPKNK…YEIRKKILED (416 aa). Coiled-coil stretches lie at residues 1240–1312 and 1351–1382; these read HNIS…GELN and QREEEQRTYEIRKKILEDKIAKKEKLKEESAE. Positions 1447–1471 are disordered; sequence LKRRMTTRKRTTDGETSPKSEQFMS.

It belongs to the formin homology family. BNI1 subfamily. In terms of assembly, interacts with IQG1.

Its subcellular location is the bud neck. It localises to the cell septum. Its function is as follows. May organize microtubules by mediating spindle positioning and movement in the budding process. Required for cytokinesis and the maintenance of polarized hyphal growth. This chain is Formin BNR1 (BNR1), found in Candida albicans (strain SC5314 / ATCC MYA-2876) (Yeast).